Reading from the N-terminus, the 120-residue chain is Large ribosomal subunit protein uL14 (120 aa).

The protein belongs to the universal ribosomal protein uL14 family. In terms of assembly, part of the 50S ribosomal subunit. Forms a cluster with proteins L3 and L19. In the 70S ribosome, L14 and L19 interact and together make contacts with the 16S rRNA in bridges B5 and B8.

Binds to 23S rRNA. Forms part of two intersubunit bridges in the 70S ribosome. The polypeptide is Large ribosomal subunit protein uL14 (Karelsulcia muelleri (strain GWSS) (Sulcia muelleri)).